Consider the following 181-residue polypeptide: uncharacterized protein (181 aa).

Positions 162-181 (QARGPAGTRTPQRRCSSHEA) are disordered.

This is an uncharacterized protein from Homo sapiens (Human).